Reading from the N-terminus, the 794-residue chain is Protocadherin beta-6 (794 aa).

The first 27 residues, 1–27, serve as a signal peptide directing secretion; it reads MMQTKVQNKKRQVAFFILLMLWGEVGS. Topologically, residues 28-688 are extracellular; it reads ESIQYSVLEE…AQADSLTVYL (661 aa). Cadherin domains are found at residues 34-132, 137-241, 246-345, 350-449, and 454-559; these read VLEE…APEF, MLLK…VPEF, YEAQ…APEL, FISL…APAF, and YTLF…SPFV. Residue asparagine 46 is glycosylated (N-linked (GlcNAc...) asparagine). Cysteine 95 and cysteine 101 form a disulfide bridge. The N-linked (GlcNAc...) asparagine glycan is linked to asparagine 183. A glycan (N-linked (GlcNAc...) asparagine) is linked at asparagine 416. The N-linked (GlcNAc...) asparagine glycan is linked to asparagine 565. The 104-residue stretch at 566–669 folds into the Cadherin 6 domain; sequence GSAPCTELVP…LVDGFSQPYL (104 aa). A helical membrane pass occupies residues 689 to 709; sequence VVALASVSSLFLFSVLLFVAV. The Cytoplasmic portion of the chain corresponds to 710–794; that stretch reads RLCRRSRAAS…PTSRNSFPFS (85 aa). The segment at 773–794 is disordered; that stretch reads PPQGTEREMEETPTSRNSFPFS. Positions 784 to 794 are enriched in polar residues; the sequence is TPTSRNSFPFS.

Forms homodimers in trans (molecules expressed by two different cells). Forms promiscuous heterodimers in cis (at the plasma membrane of the same cell) with other protocadherins.

Its subcellular location is the cell membrane. Calcium-dependent cell-adhesion protein involved in cells self-recognition and non-self discrimination. Thereby, it is involved in the establishment and maintenance of specific neuronal connections in the brain. In Homo sapiens (Human), this protein is Protocadherin beta-6.